The chain runs to 161 residues: Nucleotide-binding protein SO_3815 (161 aa).

This sequence belongs to the YajQ family.

In terms of biological role, nucleotide-binding protein. The protein is Nucleotide-binding protein SO_3815 of Shewanella oneidensis (strain ATCC 700550 / JCM 31522 / CIP 106686 / LMG 19005 / NCIMB 14063 / MR-1).